Consider the following 279-residue polypeptide: Bifunctional protein FolD (279 aa).

NADP(+) is bound by residues 166–168 (GRS) and S191.

The protein belongs to the tetrahydrofolate dehydrogenase/cyclohydrolase family. Homodimer.

The catalysed reaction is (6R)-5,10-methylene-5,6,7,8-tetrahydrofolate + NADP(+) = (6R)-5,10-methenyltetrahydrofolate + NADPH. It catalyses the reaction (6R)-5,10-methenyltetrahydrofolate + H2O = (6R)-10-formyltetrahydrofolate + H(+). It functions in the pathway one-carbon metabolism; tetrahydrofolate interconversion. Functionally, catalyzes the oxidation of 5,10-methylenetetrahydrofolate to 5,10-methenyltetrahydrofolate and then the hydrolysis of 5,10-methenyltetrahydrofolate to 10-formyltetrahydrofolate. This Shouchella clausii (strain KSM-K16) (Alkalihalobacillus clausii) protein is Bifunctional protein FolD.